Consider the following 239-residue polypeptide: Vesicle-associated protein 1-3 (239 aa).

N-acetylmethionine is present on methionine 1. Threonine 2 carries the N-acetylthreonine; in Vesicle-associated protein 1-3, N-terminally processed modification. The Cytoplasmic portion of the chain corresponds to 2 to 215 (TTGDLVNIHP…RKETSKKQSG (214 aa)). Residues 6–127 (LVNIHPTELK…EDFKLRVVYI (122 aa)) enclose the MSP domain. 2 positions are modified to phosphoserine: serine 133 and serine 164. The stretch at 179–214 (SMISKLTEEKTSATQQSQKLRLELEMLRKETSKKQS) forms a coiled coil. A helical; Anchor for type IV membrane protein transmembrane segment spans residues 216–236 (GHSLLLMLLVGLLGCVIGYLL).

The protein belongs to the VAMP-associated protein (VAP) (TC 9.B.17) family.

The protein resides in the endoplasmic reticulum membrane. In terms of biological role, may play a role in vesicle trafficking. The chain is Vesicle-associated protein 1-3 (PVA13) from Arabidopsis thaliana (Mouse-ear cress).